A 322-amino-acid chain; its full sequence is tRNA uridine(34) hydroxylase (322 aa).

The Rhodanese domain maps to 125–219; that stretch reads QQEDTIVVDA…YGKDPEVQGE (95 aa). The active-site Cysteine persulfide intermediate is C179.

It belongs to the TrhO family.

The enzyme catalyses uridine(34) in tRNA + AH2 + O2 = 5-hydroxyuridine(34) in tRNA + A + H2O. In terms of biological role, catalyzes oxygen-dependent 5-hydroxyuridine (ho5U) modification at position 34 in tRNAs. The protein is tRNA uridine(34) hydroxylase of Bacillus licheniformis (strain ATCC 14580 / DSM 13 / JCM 2505 / CCUG 7422 / NBRC 12200 / NCIMB 9375 / NCTC 10341 / NRRL NRS-1264 / Gibson 46).